The sequence spans 315 residues: Protoheme IX farnesyltransferase (315 aa).

9 consecutive transmembrane segments (helical) span residues 32 to 52, 53 to 73, 93 to 113, 120 to 140, 153 to 173, 180 to 200, 226 to 246, 249 to 269, and 295 to 315; these read VMSL…GHMN, PVLA…SGAL, IPAG…LSAF, LMVN…YAVI, IVIG…AATG, LVLF…LSLF, ALFY…MGFA, FYGV…WRLW, and IFAV…FGVF.

The protein belongs to the UbiA prenyltransferase family. Protoheme IX farnesyltransferase subfamily.

Its subcellular location is the cell inner membrane. It carries out the reaction heme b + (2E,6E)-farnesyl diphosphate + H2O = Fe(II)-heme o + diphosphate. Its pathway is porphyrin-containing compound metabolism; heme O biosynthesis; heme O from protoheme: step 1/1. In terms of biological role, converts heme B (protoheme IX) to heme O by substitution of the vinyl group on carbon 2 of heme B porphyrin ring with a hydroxyethyl farnesyl side group. The chain is Protoheme IX farnesyltransferase from Brucella suis (strain ATCC 23445 / NCTC 10510).